The primary structure comprises 577 residues: Outer spore wall assembly protein SHE10 (577 aa).

An N-terminal signal peptide occupies residues 1–23 (MGKLIKLITTLTVLVSLLQYCCE). 2 coiled-coil regions span residues 379-416 (NETR…ENVE) and 513-561 (ILRS…EEDV). Residues 525–545 (RERKERERKEREKAAAEEFQR) show a composition bias toward basic and acidic residues. The segment at 525–577 (RERKERERKEREKAAAEEFQRQQELLRQQEEEDEEDVSYTSTSTITTTTTMTL) is disordered. Positions 562–577 (SYTSTSTITTTTTMTL) are enriched in low complexity.

Belongs to the SHE10 family. As to quaternary structure, component of the mitochondria-localized RNase mitochondrial RNA-processing (RNase MRP) composed of one single RNA encoded by the NME1 gene and at least 31 proteins. Absent in the nucleus-localized RNase MRP (NuMRP).

The protein localises to the mitochondrion. Its function is as follows. Involved in spore wall assembly. May be a component of the mitochondrial RNase MRP (MtMRP), a ribonucleoprotein endoribonuclease involved in the cleaving RNA transcripts to generate primers for DNA replication in mitochondria. This Saccharomyces cerevisiae (strain YJM789) (Baker's yeast) protein is Outer spore wall assembly protein SHE10.